Reading from the N-terminus, the 201-residue chain is Putative 3-methyladenine DNA glycosylase (201 aa).

Belongs to the DNA glycosylase MPG family.

The polypeptide is Putative 3-methyladenine DNA glycosylase (Clostridium novyi (strain NT)).